The primary structure comprises 215 residues: Biogenesis of lysosome-related organelles complex 1 subunit 4 (215 aa).

The disordered stretch occupies residues 1-57 (MEEGPAVGTLSREVSTEEAEPLGAAWSGDSGHVSQSHSSASGPWDDDGPEDAPGRDL). Positions 27–42 (SGDSGHVSQSHSSASG) are enriched in low complexity. Coiled-coil stretches lie at residues 80–97 (EVEALDASLEELLAKVDE) and 134–165 (IDKLEAFVRMIGSSVARMEEQVAKAEAELGTF). T164 carries the post-translational modification Phosphothreonine.

It belongs to the BLOC1S4 family. As to quaternary structure, octamer composed of one copy each BLOC1S1, BLOC1S2, BLOC1S3, BLOC1S4, BLOC1S5, BLOC1S6, DTNBP1/BLOC1S7 and SNAPIN/BLOC1S8. Component of the biogenesis of lysosome-related organelles complex 1 (BLOC-1) composed of BLOC1S1, BLOC1S2, BLOC1S3, BLOC1S4, BLOC1S5, BLOC1S6, DTNBP1/BLOC1S7 and SNAPIN/BLOC1S8. The BLOC-1 complex associates with the AP-3 protein complex and membrane protein cargos. Interacts with BLOC1S5 and BLOC1S6. Widely expressed.

It is found in the cytoplasm. In terms of biological role, component of the BLOC-1 complex, a complex that is required for normal biogenesis of lysosome-related organelles (LRO), such as platelet dense granules and melanosomes. In concert with the AP-3 complex, the BLOC-1 complex is required to target membrane protein cargos into vesicles assembled at cell bodies for delivery into neurites and nerve terminals. The BLOC-1 complex, in association with SNARE proteins, is also proposed to be involved in neurite extension. Plays a role in intracellular vesicle trafficking. This chain is Biogenesis of lysosome-related organelles complex 1 subunit 4 (Bloc1s4), found in Mus musculus (Mouse).